The primary structure comprises 216 residues: Phosphoribosylformylglycinamidine synthase subunit PurQ (216 aa).

The Glutamine amidotransferase type-1 domain occupies 2 to 216; sequence SIGVIVFPGS…GRRMLEALLG (215 aa). The active-site Nucleophile is the C86. Residues H193 and E195 contribute to the active site.

In terms of assembly, part of the FGAM synthase complex composed of 1 PurL, 1 PurQ and 2 PurS subunits.

Its subcellular location is the cytoplasm. The enzyme catalyses N(2)-formyl-N(1)-(5-phospho-beta-D-ribosyl)glycinamide + L-glutamine + ATP + H2O = 2-formamido-N(1)-(5-O-phospho-beta-D-ribosyl)acetamidine + L-glutamate + ADP + phosphate + H(+). The catalysed reaction is L-glutamine + H2O = L-glutamate + NH4(+). The protein operates within purine metabolism; IMP biosynthesis via de novo pathway; 5-amino-1-(5-phospho-D-ribosyl)imidazole from N(2)-formyl-N(1)-(5-phospho-D-ribosyl)glycinamide: step 1/2. Its function is as follows. Part of the phosphoribosylformylglycinamidine synthase complex involved in the purines biosynthetic pathway. Catalyzes the ATP-dependent conversion of formylglycinamide ribonucleotide (FGAR) and glutamine to yield formylglycinamidine ribonucleotide (FGAM) and glutamate. The FGAM synthase complex is composed of three subunits. PurQ produces an ammonia molecule by converting glutamine to glutamate. PurL transfers the ammonia molecule to FGAR to form FGAM in an ATP-dependent manner. PurS interacts with PurQ and PurL and is thought to assist in the transfer of the ammonia molecule from PurQ to PurL. The chain is Phosphoribosylformylglycinamidine synthase subunit PurQ from Synechococcus sp. (strain CC9605).